The sequence spans 68 residues: Adipokinetic prohormone type 1 (68 aa).

A signal peptide spans 1-20 (MNYVSIFVLIVACLCVLADA). Glutamine 21 carries the post-translational modification Pyrrolidone carboxylic acid. Glycine 30 carries the glycine amide modification. Positions 34-68 (GAVAATMSCRSEETIAAIYKLIQNEAERLLLCQKP) are excised as a propeptide.

As to expression, expressed in antennal lobe (AL), corpora cardiaca (CC), corpora allata (CA) and gnathal ganglion (GNG) (at protein level). Expression in CC and CA detected in all animals, expression in GNG in some animals and in AL in few animals (at protein level).

Its subcellular location is the secreted. In terms of biological role, this hormone, released from cells in the corpora cardiaca, causes release of diglycerides from the fat body and stimulation of muscles to use these diglycerides as an energy source during energy-demanding processes. The polypeptide is Adipokinetic prohormone type 1 (Agrotis ipsilon (Black cutworm moth)).